A 180-amino-acid polypeptide reads, in one-letter code: Protein SPMIP9 (180 aa).

Microtubule inner protein component of sperm flagellar doublet microtubules. Only detected after the mouse is 35 days old. Expression increases gradually from day 35 to 6 months, and remains stable after 54 days. Exclusively expressed in the epididymis and testis.

It is found in the nucleus. The protein localises to the cytoplasm. It localises to the cytoskeleton. Its subcellular location is the flagellum axoneme. In terms of biological role, microtubule inner protein (MIP) part of the dynein-decorated doublet microtubules (DMTs) in flagella axoneme. The chain is Protein SPMIP9 (Spmip9) from Mus musculus (Mouse).